The following is a 1065-amino-acid chain: Cellulose synthase A catalytic subunit 3 [UDP-forming] (1065 aa).

Over 1-260 (MESEGETAGK…PSSRINPYRM (260 aa)) the chain is Cytoplasmic. Residue S3 is modified to Phosphoserine. C20, C23, C39, C42, C47, C50, C62, and C65 together coordinate Zn(2+). The segment at 20 to 66 (CQICSDNVGKTVDGDRFVACDICSFPVCRPCYEYERKDGNQSCPQCK) adopts an RING-type; degenerate zinc-finger fold. Phosphoserine is present on residues S151, S211, and S216. Residues 261 to 281 (VIMLRLVILCLFLHYRITNPV) traverse the membrane as a helical segment. Over 282 to 283 (PN) the chain is Extracellular. A helical transmembrane segment spans residues 284 to 304 (AFALWLVSVICEIWFALSWIL). The Cytoplasmic segment spans residues 305 to 842 (DQFPKWFPVN…LERFAYVNTT (538 aa)). S343, K349, E350, and D379 together coordinate UDP-alpha-D-glucose. Residue D379 is part of the active site. Positions 433–457 (VKDRRAMKREYEEFKIRINALVSKA) form a coiled coil. K520 lines the UDP-alpha-D-glucose pocket. Residues K521 and D545 each contribute to the Mn(2+) site. A disordered region spans residues 643-672 (SKLCGGSRKKNSKAKKESDKKKSGRHTDST). Residues 656-670 (AKKESDKKKSGRHTD) are compositionally biased toward basic and acidic residues. D765 is a catalytic residue. Residues 843 to 863 (IYPITSIPLLMYCTLPAVCLF) traverse the membrane as a helical segment. Over 864–874 (TNQFIIPQISN) the chain is Extracellular. Residues 875 to 895 (IASIWFLSLFLSIFATGILEM) form a helical membrane-spanning segment. Residues 896–910 (RWSGVGIDEWWRNEQ) are Cytoplasmic-facing. Residues 911-931 (FWVIGGVSAHLFAVFQGILKV) traverse the membrane as a helical segment. Residues 932–961 (LAGIDTNFTVTSKASDEDGDFAELYLFKWT) lie on the Extracellular side of the membrane. N938 is a glycosylation site (N-linked (GlcNAc...) asparagine). Residues 962–982 (TLLIPPTTLLIVNLVGVVAGV) traverse the membrane as a helical segment. Residues 983–993 (SYAINSGYQSW) lie on the Cytoplasmic side of the membrane. A helical membrane pass occupies residues 994 to 1014 (GPLFGKLFFAFWVIVHLYPFL). Over 1015-1023 (KGLMGRQNR) the chain is Extracellular. The helical transmembrane segment at 1024-1044 (TPTIVVVWSVLLASIFSLLWV) threads the bilayer. Topologically, residues 1045-1065 (RIDPFTSRVTGPDILECGINC) are cytoplasmic.

It belongs to the glycosyltransferase 2 family. Plant cellulose synthase subfamily. Homodimer. Interacts with CESA1 and CESA6. Interacts with STL1 and STL2, but not with GOT1. Binds to CSI1 and CSI3. Interacts with PAT24/TIP1. Requires Zn(2+) as cofactor. The cofactor is Mn(2+). Palmitoylated, in part by PAT24/TIP1. As to expression, expressed in young plants, flowers and roots, and to a lower extent in leaves and stems. Localized in all cells except meristematic cells. Accumulates particularly in root caps, root hairs, epidermal layer, midveins of leaves and anthers. Not present in old tissues.

The protein localises to the cell membrane. It is found in the golgi apparatus membrane. The enzyme catalyses [(1-&gt;4)-beta-D-glucosyl](n) + UDP-alpha-D-glucose = [(1-&gt;4)-beta-D-glucosyl](n+1) + UDP + H(+). Its pathway is glycan metabolism; plant cellulose biosynthesis. Catalytic subunit of cellulose synthase terminal complexes ('rosettes'), required for beta-1,4-glucan microfibril crystallization, a major mechanism of the cell wall formation. Involved in the primary cell wall formation, especially in roots. This chain is Cellulose synthase A catalytic subunit 3 [UDP-forming], found in Arabidopsis thaliana (Mouse-ear cress).